We begin with the raw amino-acid sequence, 152 residues long: Troponin C (152 aa).

Thr1 carries the post-translational modification N-acetylthreonine. EF-hand domains lie at 9–44 (KQIL…LGLL), 45–80 (VKDD…KLKE), 82–117 (LDER…LGDE), and 118–152 (LTEE…SSDA). Asp131, Asp133, Ser135, Thr137, and Glu142 together coordinate Ca(2+).

This sequence belongs to the troponin C family.

Functionally, troponin is the central regulatory protein of striated muscle contraction. Tn consists of three components: Tn-I which is the inhibitor of actomyosin ATPase, Tn-T which contains the binding site for tropomyosin and Tn-C. The binding of calcium to Tn-C abolishes the inhibitory action of Tn on actin filaments. The chain is Troponin C from Mizuhopecten yessoensis (Japanese scallop).